The primary structure comprises 940 residues: Phagocyte signaling-impaired protein (940 aa).

The stretch at 77 to 110 (STTLHVMTLCYKETDQLDKICQIFTSASKQLPGN) is one TPR repeat.

Belongs to the MDM20/NAA25 family. As to quaternary structure, component of the N-terminal acetyltransferase B (NatB) complex.

Its subcellular location is the lysosome. In terms of biological role, non-catalytic subunit of the NatB complex which catalyzes acetylation of the N-terminal methionine residues of proteins beginning with Met-Asp or Met-Glu. Has 2 roles in the larval immune response: required both for the phagocytic degradation of internalized bacteria and for the induction of Defensin in the fat body. Within the phagocytic blood cells, has a role in detection of infection and activation of the humoral immune response. The chain is Phagocyte signaling-impaired protein from Aedes aegypti (Yellowfever mosquito).